The chain runs to 782 residues: Protein phosphatase 1 regulatory subunit 12C (782 aa).

Composition is skewed to low complexity over residues 1–19 and 77–88; these read MSGE…AAAA and DPGPGSGAASDP. Disordered regions lie at residues 1–45 and 77–98; these read MSGE…GERR and DPGP…RAVL. An N-acetylserine modification is found at Ser2. ANK repeat units lie at residues 104-133, 137-166, 230-259, and 263-292; these read DGIS…TVNQ, EGWT…NIAA, TGAS…DTEL, and DGWT…GMDS. A coiled-coil region spans residues 301–332; the sequence is CDLADEDVMNLLEELAQKQEDLRNQKEGSQGR. The interval 321-685 is disordered; it reads DLRNQKEGSQ…HEEPDGGFRK (365 aa). The span at 332 to 341 shows a compositional bias: polar residues; sequence RGQESQVPSS. Residues 353–369 are compositionally biased toward basic and acidic residues; the sequence is SSREKISLQDLSKERRP. The span at 401–413 shows a compositional bias: low complexity; it reads VSSPVSSNPKSPV. Ser403, Ser411, Ser431, Ser454, and Ser509 each carry phosphoserine. Positions 451 to 465 are enriched in polar residues; it reads RSASSSLLEKASTQA. Positions 537–546 are enriched in basic and acidic residues; sequence VRDEESESQR. Residues 547–557 show a composition bias toward basic residues; it reads KARSRLMRQSR. Thr560 carries the phosphothreonine modification. Ser647 carries the post-translational modification Phosphoserine. Residues 664–685 are compositionally biased toward basic and acidic residues; the sequence is SQRDLVLESKQEHEEPDGGFRK. The stretch at 681 to 782 forms a coiled coil; the sequence is GGFRKMYTEL…LIRVISKLSK (102 aa).

As to quaternary structure, PP1 comprises a catalytic subunit, PPP1CA, PPP1CB or PPP1CC, and one or several targeting or regulatory subunits. PPP1R12C mediates binding to myosin. Interacts via its N-terminus with PPP1CB. Interacts with IL16. Interacts with the coiled-coil domain of MPRIP. Interacts with NOD2. In terms of processing, phosphorylation at Thr-560 is essential for its interaction with PPP1CB.

It localises to the cytoplasm. The protein localises to the cytoskeleton. The protein resides in the stress fiber. In terms of biological role, regulates myosin phosphatase activity. The chain is Protein phosphatase 1 regulatory subunit 12C from Mus musculus (Mouse).